Here is a 518-residue protein sequence, read N- to C-terminus: MIPDVSQALAWLEKHPQALQGIQRGLERETLRVNADGTLATTGHPPALGSALTHKWITTDFAEALLEFITPVDGDIEHMLTFMRDVHRYTARQLGDERMWPLSMPCYIAPGQDIELAQYGTSNVGRLKTLYREGLKNRYGALMQTISGVHYNFSLPMAFWQAKCGVEDAESGKEAISAGYFRSIRNYYRFGWVIPYLFGASPAICSSFLQGKPTTLPFEETGNGMYYLPYATSLRLSDLGYTNKSQSNLGITFNDLHEYVAGLKRAIKTPSEEYAKIGLQKDGKYLQINSNILQIENELYAPIRPKRVTRRGETPSDALLRGGIEYIEVRSLDINPFSPIGVDAQQVRFLDLFMVWCALADAPEMSSDELLCTRTNWNRVILEGRKPGLTLGIGCESAQFPLAQVGKDLFRDLRRVAQTLDSIHGGQAYQQVCDELLACFDDPELTFSARILRSMIEEGIGGTGRALADRYRTQLREEPLEILSEDDFIAERDASVARQKKVEAEDSEPFEALLARHA.

The protein belongs to the glutamate--cysteine ligase type 1 family. Type 1 subfamily.

The catalysed reaction is L-cysteine + L-glutamate + ATP = gamma-L-glutamyl-L-cysteine + ADP + phosphate + H(+). The protein operates within sulfur metabolism; glutathione biosynthesis; glutathione from L-cysteine and L-glutamate: step 1/2. In Klebsiella pneumoniae subsp. pneumoniae (strain ATCC 700721 / MGH 78578), this protein is Glutamate--cysteine ligase.